We begin with the raw amino-acid sequence, 262 residues long: Phosphonates import ATP-binding protein PhnC (262 aa).

Positions 5-253 (IRVEKLAKTF…RFDHLYRSIN (249 aa)) constitute an ABC transporter domain. ATP is bound at residue 37 to 44 (GPSGSGKS).

It belongs to the ABC transporter superfamily. Phosphonates importer (TC 3.A.1.9.1) family. The complex is composed of two ATP-binding proteins (PhnC), two transmembrane proteins (PhnE) and a solute-binding protein (PhnD).

The protein resides in the cell inner membrane. It catalyses the reaction phosphonate(out) + ATP + H2O = phosphonate(in) + ADP + phosphate + H(+). Part of the ABC transporter complex PhnCDE involved in phosphonates import. Responsible for energy coupling to the transport system. The chain is Phosphonates import ATP-binding protein PhnC from Shigella sonnei (strain Ss046).